Reading from the N-terminus, the 371-residue chain is MTFELLATDGKARRGRLTFPRGVVETPAFMPVGTYGTVKGMLPRDIEAIGAQIILGNTFHLWLRPGTEVIRRHGDLHDFMQWHGPILTDSGGFQVFSLGALRKIREEGVYFASPVDGAKVFMGPEESMRVQRDLGSDVVMIFDECTPYPADEEVARRSMELSLRWAGRSKIAHEGNPAALFGIVQGGMHEDLRLRSLDGLEEIGFDGLAIGGLSVGEPKEEMIRVLDFLPPRLPADKPRYLMGVGKPEDLVEGVRRGIDMFDCVMPTRNARNGHLFVDSGVLKIRNAVHRHDESPLDPACDCHTCKHFSRAYLHHLDKCGEMLGSMLNTIHNLRHYQRLMTGLREAIQQGKLAAFVDTFYARRGLPVPPLT.

Asp89 functions as the Proton acceptor in the catalytic mechanism. Residues 89 to 93, Asp143, Gln185, and Gly212 contribute to the substrate site; that span reads DSGGF. The RNA binding stretch occupies residues 243-249; the sequence is GVGKPED. Catalysis depends on Asp262, which acts as the Nucleophile. Residues 267–271 are RNA binding; important for wobble base 34 recognition; the sequence is TRNAR. Zn(2+) contacts are provided by Cys300, Cys302, Cys305, and His331.

Belongs to the queuine tRNA-ribosyltransferase family. In terms of assembly, homodimer. Within each dimer, one monomer is responsible for RNA recognition and catalysis, while the other monomer binds to the replacement base PreQ1. Requires Zn(2+) as cofactor.

It catalyses the reaction 7-aminomethyl-7-carbaguanine + guanosine(34) in tRNA = 7-aminomethyl-7-carbaguanosine(34) in tRNA + guanine. It participates in tRNA modification; tRNA-queuosine biosynthesis. In terms of biological role, catalyzes the base-exchange of a guanine (G) residue with the queuine precursor 7-aminomethyl-7-deazaguanine (PreQ1) at position 34 (anticodon wobble position) in tRNAs with GU(N) anticodons (tRNA-Asp, -Asn, -His and -Tyr). Catalysis occurs through a double-displacement mechanism. The nucleophile active site attacks the C1' of nucleotide 34 to detach the guanine base from the RNA, forming a covalent enzyme-RNA intermediate. The proton acceptor active site deprotonates the incoming PreQ1, allowing a nucleophilic attack on the C1' of the ribose to form the product. After dissociation, two additional enzymatic reactions on the tRNA convert PreQ1 to queuine (Q), resulting in the hypermodified nucleoside queuosine (7-(((4,5-cis-dihydroxy-2-cyclopenten-1-yl)amino)methyl)-7-deazaguanosine). The sequence is that of Queuine tRNA-ribosyltransferase from Azotobacter vinelandii (strain DJ / ATCC BAA-1303).